Here is a 228-residue protein sequence, read N- to C-terminus: Ribose-5-phosphate isomerase A (228 aa).

Substrate is bound by residues 32–35, 85–88, and 98–101; these read TGST, DGAD, and KGGG. The Proton acceptor role is filled by glutamate 107. Residue lysine 125 participates in substrate binding.

It belongs to the ribose 5-phosphate isomerase family. As to quaternary structure, homodimer.

It carries out the reaction aldehydo-D-ribose 5-phosphate = D-ribulose 5-phosphate. It functions in the pathway carbohydrate degradation; pentose phosphate pathway; D-ribose 5-phosphate from D-ribulose 5-phosphate (non-oxidative stage): step 1/1. Catalyzes the reversible conversion of ribose-5-phosphate to ribulose 5-phosphate. This Ralstonia nicotianae (strain ATCC BAA-1114 / GMI1000) (Ralstonia solanacearum) protein is Ribose-5-phosphate isomerase A.